We begin with the raw amino-acid sequence, 289 residues long: MGEKRNRNGKDANSQNRKKFKVSSGFLDPGTSGIYATCSRRHERQAAQELQLLFEEKFQELYGDIKEGEDESENDEKKDLSIEDQIKKELQELKGEETGKDLSSGETKKKDPLAFIDLNCECVTFCKTRKPIVPEEFVLSIMKDLADPKNMVKRTRYVQKLTPITYSCNAKMEQLIKLANLVIGPHFHDPSNVKKNYKFAVEVTRRNFNTIERMDIINQVVKLVNKEGSEFNHTVDLKNYDKLILVECFKSNIGMCVVDGDYKTKYRKYNVQQLYESKFRKDEDKSVKQ.

The segment covering 1–10 has biased composition (basic and acidic residues); that stretch reads MGEKRNRNGK. Disordered regions lie at residues 1–31 and 64–83; these read MGEKRNRNGKDANSQNRKKFKVSSGFLDPGT and DIKEGEDESENDEKKDLSIE. A Phosphoserine modification is found at Ser-72. One can recognise a THUMP domain in the interval 146–259; it reads ADPKNMVKRT…KSNIGMCVVD (114 aa).

The protein localises to the cytoplasm. It is found in the nucleus. Probable tRNA acetyltransferase required for the formation of the modified nucleoside N(4)-acetylcytidine in serine and leucine tRNAs. Binds RNA. This chain is tRNA acetyltransferase TAN1 (TAN1), found in Saccharomyces cerevisiae (strain ATCC 204508 / S288c) (Baker's yeast).